The primary structure comprises 110 residues: MLPVCVDADQALRCSVLWRPWSLSPTEARGHKTLAGGVRSARPSGGVFHHPVRLFLPRSRMQEYLSRLGSSVLASFPVQATLHFYNDEDSSSEEEEDEEHANTRCRLWRP.

A WRPW motif motif is present at residues 18-21; the sequence is WRPW. Residues 50 to 85 are ripply homology domain; the sequence is HPVRLFLPRSRMQEYLSRLGSSVLASFPVQATLHFY. Positions 87-99 are enriched in acidic residues; it reads DEDSSSEEEEDEE. The interval 87-110 is disordered; it reads DEDSSSEEEEDEEHANTRCRLWRP.

This sequence belongs to the ripply family.

Its subcellular location is the nucleus. Its function is as follows. Probable transcriptional regulator involved in developmental processes. This Danio rerio (Zebrafish) protein is Protein ripply3 (ripply3).